The sequence spans 365 residues: MSIEIARIKKSFGRTQVLNDISLDIPSGQMVALLGPSGSGKTTLLRIIAGLEHQSSGHIRFHGTDVSRLHARERKVGFVFQHYALFRHMTVFDNIAFGLTVLPRRDRPTAAAIKTKVTQLLEMVQLAHLADRFPAQLSGGQKQRVALARALAVEPQILLLDEPFGALDAQVRKELRRWLRQLHEELKFTSVFVTHDQEEATEVADRVVVMSQGNIEQADAPDRVWREPATRFVLEFMGEVNRLTGTVRGGQFHVGAHRWPLGYTPAYQGPVDLFLRPWEVDISRRTSLDSPLPVQVIEASPKGHYTQLVVQPLGWYHDPLTVVMAGEDVPVRGERLFVGLQKARLYNGDQRIETREEELALAQSA.

The ABC transporter domain occupies isoleucine 3–methionine 237. ATP is bound at residue glycine 35–threonine 42.

Belongs to the ABC transporter superfamily. Sulfate/tungstate importer (TC 3.A.1.6) family. The complex is composed of two ATP-binding proteins (CysA), two transmembrane proteins (CysT and CysW) and a solute-binding protein (CysP).

Its subcellular location is the cell inner membrane. It catalyses the reaction sulfate(out) + ATP + H2O = sulfate(in) + ADP + phosphate + H(+). It carries out the reaction thiosulfate(out) + ATP + H2O = thiosulfate(in) + ADP + phosphate + H(+). Its function is as follows. Part of the ABC transporter complex CysAWTP involved in sulfate/thiosulfate import. Responsible for energy coupling to the transport system. The polypeptide is Sulfate/thiosulfate import ATP-binding protein CysA (Salmonella typhimurium (strain LT2 / SGSC1412 / ATCC 700720)).